The primary structure comprises 138 residues: Small ribosomal subunit protein uS12 (138 aa).

The segment at 1-20 (MPTISQLINHGRSAKTSKSK) is disordered. Asp-102 is modified (3-methylthioaspartic acid). The disordered stretch occupies residues 116–138 (DAAGVDKRKQGRSIYGTKKPKEN).

Belongs to the universal ribosomal protein uS12 family. In terms of assembly, part of the 30S ribosomal subunit. Contacts proteins S8 and S17. May interact with IF1 in the 30S initiation complex.

In terms of biological role, with S4 and S5 plays an important role in translational accuracy. Its function is as follows. Interacts with and stabilizes bases of the 16S rRNA that are involved in tRNA selection in the A site and with the mRNA backbone. Located at the interface of the 30S and 50S subunits, it traverses the body of the 30S subunit contacting proteins on the other side and probably holding the rRNA structure together. The combined cluster of proteins S8, S12 and S17 appears to hold together the shoulder and platform of the 30S subunit. The polypeptide is Small ribosomal subunit protein uS12 (Metamycoplasma arthritidis (strain 158L3-1) (Mycoplasma arthritidis)).